The primary structure comprises 1137 residues: Protein sel-1 homolog 3 (1137 aa).

Residues 1-42 (MQWRGAGLWWPRRRQQQQQQQPPPPAFGPPAAAMVPPSRGVS) form a disordered region. 2 N-linked (GlcNAc...) asparagine glycosylation sites follow: asparagine 206 and asparagine 387. Sel1-like repeat units lie at residues 575-609 (HKAS…GQGS), 611-647 (RLSS…TKTP), 694-730 (AAAQ…LETE), 732-767 (PALI…SKGL), 768-800 (HQAV…EMGN), 801-839 (PDAS…QGGH), and 840-877 (IEGT…EKNG). Serine 613 bears the Phosphoserine mark. N-linked (GlcNAc...) asparagine glycosylation occurs at asparagine 942. The Sel1-like 8 repeat unit spans residues 952 to 988 (SFAYLKMGDLYYYGHQNQSQDLELSVQMYAQAALDGD). A helical transmembrane segment spans residues 1067–1087 (LIYFLGTFLLSVVIAWMVLYL). The disordered stretch occupies residues 1100–1137 (AWVSADPTSSTPSPAVPPAADASDHDPPMMANGPEPRG). The span at 1102 to 1120 (VSADPTSSTPSPAVPPAAD) shows a compositional bias: low complexity.

It localises to the membrane. In Mus musculus (Mouse), this protein is Protein sel-1 homolog 3 (Sel1l3).